Consider the following 180-residue polypeptide: Negative modulator of initiation of replication (180 aa).

3 interaction with DNA regions span residues 86 to 87 (AV), 115 to 119 (RTRVY), and 149 to 155 (NTNTGRK).

The protein belongs to the SeqA family. In terms of assembly, homodimer. Polymerizes to form helical filaments.

It is found in the cytoplasm. Its function is as follows. Negative regulator of replication initiation, which contributes to regulation of DNA replication and ensures that replication initiation occurs exactly once per chromosome per cell cycle. Binds to pairs of hemimethylated GATC sequences in the oriC region, thus preventing assembly of replication proteins and re-initiation at newly replicated origins. Repression is relieved when the region becomes fully methylated. This is Negative modulator of initiation of replication from Enterobacter sp. (strain 638).